A 72-amino-acid chain; its full sequence is MLALSRKLNESIMLGNDIEITILEIKGDQVKIGIKAPKSVPIYRKEIYLQIQESNKEAIDGGVSLEAISKLF.

This sequence belongs to the CsrA/RsmA family. Homodimer; the beta-strands of each monomer intercalate to form a hydrophobic core, while the alpha-helices form wings that extend away from the core.

Its subcellular location is the cytoplasm. In terms of biological role, a translational regulator that binds mRNA to regulate translation initiation and/or mRNA stability. Usually binds in the 5'-UTR at or near the Shine-Dalgarno sequence preventing ribosome-binding, thus repressing translation. Its main target seems to be the major flagellin gene, while its function is anatagonized by FliW. This chain is Translational regulator CsrA, found in Lachnoclostridium phytofermentans (strain ATCC 700394 / DSM 18823 / ISDg) (Clostridium phytofermentans).